Reading from the N-terminus, the 416-residue chain is UDP-N-acetylglucosamine 1-carboxyvinyltransferase (416 aa).

Residue 22-23 coordinates phosphoenolpyruvate; the sequence is KN. Arg92 lines the UDP-N-acetyl-alpha-D-glucosamine pocket. The active-site Proton donor is Cys116. Cys116 bears the 2-(S-cysteinyl)pyruvic acid O-phosphothioketal mark. The UDP-N-acetyl-alpha-D-glucosamine site is built by Asp306 and Ile328.

This sequence belongs to the EPSP synthase family. MurA subfamily.

The protein resides in the cytoplasm. It catalyses the reaction phosphoenolpyruvate + UDP-N-acetyl-alpha-D-glucosamine = UDP-N-acetyl-3-O-(1-carboxyvinyl)-alpha-D-glucosamine + phosphate. It participates in cell wall biogenesis; peptidoglycan biosynthesis. Cell wall formation. Adds enolpyruvyl to UDP-N-acetylglucosamine. The protein is UDP-N-acetylglucosamine 1-carboxyvinyltransferase of Buchnera aphidicola subsp. Baizongia pistaciae (strain Bp).